An 88-amino-acid chain; its full sequence is UPF0297 protein RBAM_024500 (88 aa).

It belongs to the UPF0297 family.

This Bacillus velezensis (strain DSM 23117 / BGSC 10A6 / LMG 26770 / FZB42) (Bacillus amyloliquefaciens subsp. plantarum) protein is UPF0297 protein RBAM_024500.